The primary structure comprises 118 residues: Small ribosomal subunit protein uS13 (118 aa).

A disordered region spans residues 94–118; it reads GLPLRGQRTRTNARTRKGPRKAIRK.

This sequence belongs to the universal ribosomal protein uS13 family. As to quaternary structure, part of the 30S ribosomal subunit. Forms a loose heterodimer with protein S19. Forms two bridges to the 50S subunit in the 70S ribosome.

In terms of biological role, located at the top of the head of the 30S subunit, it contacts several helices of the 16S rRNA. In the 70S ribosome it contacts the 23S rRNA (bridge B1a) and protein L5 of the 50S subunit (bridge B1b), connecting the 2 subunits; these bridges are implicated in subunit movement. Contacts the tRNAs in the A and P-sites. This chain is Small ribosomal subunit protein uS13, found in Xanthomonas axonopodis pv. citri (strain 306).